Here is a 298-residue protein sequence, read N- to C-terminus: N-acetylmuramic acid 6-phosphate etherase (298 aa).

The 164-residue stretch at 55–218 folds into the SIS domain; that stretch reads IHTQVSGGGR…STGLMIKSGK (164 aa). Catalysis depends on Glu-83, which acts as the Proton donor. Glu-114 is a catalytic residue.

It belongs to the GCKR-like family. MurNAc-6-P etherase subfamily. As to quaternary structure, homodimer.

It catalyses the reaction N-acetyl-D-muramate 6-phosphate + H2O = N-acetyl-D-glucosamine 6-phosphate + (R)-lactate. The protein operates within amino-sugar metabolism; 1,6-anhydro-N-acetylmuramate degradation. Its pathway is amino-sugar metabolism; N-acetylmuramate degradation. It participates in cell wall biogenesis; peptidoglycan recycling. Specifically catalyzes the cleavage of the D-lactyl ether substituent of MurNAc 6-phosphate, producing GlcNAc 6-phosphate and D-lactate. Together with AnmK, is also required for the utilization of anhydro-N-acetylmuramic acid (anhMurNAc) either imported from the medium or derived from its own cell wall murein, and thus plays a role in cell wall recycling. This chain is N-acetylmuramic acid 6-phosphate etherase, found in Escherichia coli O127:H6 (strain E2348/69 / EPEC).